We begin with the raw amino-acid sequence, 1246 residues long: Zinc finger protein 687a (1246 aa).

Residues 24–47 (KEAIQSDTHGNHNEHSSVVGKERS) are compositionally biased toward basic and acidic residues. Residues 24 to 387 (KEAIQSDTHG…PTLVESASDA (364 aa)) are disordered. Composition is skewed to polar residues over residues 88–111 (GEFS…SSVP) and 163–195 (AFTN…FSSK). Positions 287-301 (SSTNPTSLTSTNNLP) are enriched in low complexity. Over residues 302-317 (VEEKDLEHIIEERDSP) the composition is skewed to basic and acidic residues. Over residues 326–338 (QSRTSLPSNSQGA) the composition is skewed to polar residues. Composition is skewed to basic and acidic residues over residues 341–350 (SKQRITREEA) and 360–375 (MQEK…EGKS). The C2H2-type 1 zinc finger occupies 587–619 (YRCLECGDAFALERSLARHYDRRSMRIEVTCNH). The C2H2-type 2; degenerate zinc finger occupies 696 to 719 (HSCPECWSTFKGKQELVAHFQEVE). C2H2-type zinc fingers lie at residues 817–840 (HKCP…ASQH), 854–876 (YKCV…IDTH), and 885–908 (FKCP…KDTH). The segment at 907–953 (THRETSNHDGTSTQNSLVKMESSDGEEWGRDEEEDKGKVSDANSAVP) is disordered. A compositionally biased stretch (polar residues) spans 914 to 923 (HDGTSTQNSL). Over residues 929-940 (SDGEEWGRDEEE) the composition is skewed to acidic residues. C2H2-type zinc fingers lie at residues 958–981 (WSCS…TEQH) and 988–1011 (FPCT…RVKH). The segment at 1018-1044 (FYCQLCTGEKRSFSSKLILEKHIQAQH) adopts a C2H2-type 8; degenerate zinc-finger fold. The tract at residues 1045-1093 (AGERGTATQSQAVPQFTDGADSSSEHDAGVLGGSSVEPESRLAESTLTR) is disordered. 2 C2H2-type zinc fingers span residues 1137-1160 (AQCQ…FISH) and 1210-1232 (HICK…FRTH).

It belongs to the krueppel C2H2-type zinc-finger protein family. In terms of tissue distribution, widely expressed with highest levels in kidney, spleen and ovary.

The protein resides in the nucleus. May be involved in transcriptional regulation. The chain is Zinc finger protein 687a (znf687a) from Danio rerio (Zebrafish).